The chain runs to 301 residues: Probable alpha-L-glutamate ligase (301 aa).

The ATP-grasp domain occupies 104–287; the sequence is LQLLSRKGIG…VADEIIRFIE (184 aa). Residues Lys-141, 178–179, Asp-187, and 211–213 each bind ATP; these read EF and RSN. Mg(2+) is bound by residues Asp-248, Glu-260, and Asn-262. Residues Asp-248, Glu-260, and Asn-262 each coordinate Mn(2+).

It belongs to the RimK family. Mg(2+) serves as cofactor. The cofactor is Mn(2+).

The chain is Probable alpha-L-glutamate ligase from Syntrophotalea carbinolica (strain DSM 2380 / NBRC 103641 / GraBd1) (Pelobacter carbinolicus).